The sequence spans 336 residues: Tetraacyldisaccharide 4'-kinase (336 aa).

An ATP-binding site is contributed by 60 to 67 (TIGGTGKT).

The protein belongs to the LpxK family.

It carries out the reaction a lipid A disaccharide + ATP = a lipid IVA + ADP + H(+). Its pathway is glycolipid biosynthesis; lipid IV(A) biosynthesis; lipid IV(A) from (3R)-3-hydroxytetradecanoyl-[acyl-carrier-protein] and UDP-N-acetyl-alpha-D-glucosamine: step 6/6. Functionally, transfers the gamma-phosphate of ATP to the 4'-position of a tetraacyldisaccharide 1-phosphate intermediate (termed DS-1-P) to form tetraacyldisaccharide 1,4'-bis-phosphate (lipid IVA). The polypeptide is Tetraacyldisaccharide 4'-kinase (Pseudomonas putida (strain W619)).